A 230-amino-acid chain; its full sequence is Gilatoxin (230 aa).

In terms of domain architecture, Peptidase S1 spans 1–230 (IIGGQECDET…ISFLFWIQSI (230 aa)). 5 disulfides stabilise this stretch: C7/C146, C26/C42, C125/C193, C157/C172, and C183/C208. The active-site Charge relay system is H41. The N-linked (GlcNAc...) asparagine glycan is linked to N84. D93 (charge relay system) is an active-site residue. S187 (charge relay system) is an active-site residue.

The protein belongs to the peptidase S1 family. Post-translationally, extensively glycosylated, contains approximately 8 mol of monosaccharide per mol of toxin. As to expression, expressed by the mandibular venom gland.

The protein localises to the secreted. Functionally, has kallikrein-like activity, releases bradykinin from kininogen. Catalyzes the hydrolysis of various arginine ester substrates for trypsin and thrombin and degrades both angiotensin I and II by cleavage of the dipeptide Asp-Arg from the NH2-terminal end. Fibrinogen is also degraded but a fibrin clot is not produced. May have a potentiating effect on potent hemorrhagic toxins present in the venom. The chain is Gilatoxin from Heloderma horridum horridum (Mexican beaded lizard).